The following is a 348-amino-acid chain: Protein RecA (348 aa).

Residue 64–71 (GPESSGKT) coordinates ATP. Positions 326-335 (EIDGTNKEPL) are enriched in basic and acidic residues. Positions 326-348 (EIDGTNKEPLDENEETLSLLDDE) are disordered. Over residues 336-348 (DENEETLSLLDDE) the composition is skewed to acidic residues.

The protein belongs to the RecA family.

It localises to the cytoplasm. In terms of biological role, can catalyze the hydrolysis of ATP in the presence of single-stranded DNA, the ATP-dependent uptake of single-stranded DNA by duplex DNA, and the ATP-dependent hybridization of homologous single-stranded DNAs. It interacts with LexA causing its activation and leading to its autocatalytic cleavage. This Listeria innocua serovar 6a (strain ATCC BAA-680 / CLIP 11262) protein is Protein RecA.